A 199-amino-acid chain; its full sequence is Protein-methionine-sulfoxide reductase heme-binding subunit MsrQ (199 aa).

5 helical membrane passes run Val-13–Gly-33, Leu-79–Glu-99, Leu-120–Met-140, Trp-147–Trp-167, and Val-169–Leu-189.

Belongs to the MsrQ family. As to quaternary structure, heterodimer of a catalytic subunit (MsrP) and a heme-binding subunit (MsrQ). FMN serves as cofactor. It depends on heme b as a cofactor.

It is found in the cell inner membrane. Its function is as follows. Part of the MsrPQ system that repairs oxidized periplasmic proteins containing methionine sulfoxide residues (Met-O), using respiratory chain electrons. Thus protects these proteins from oxidative-stress damage caused by reactive species of oxygen and chlorine generated by the host defense mechanisms. MsrPQ is essential for the maintenance of envelope integrity under bleach stress, rescuing a wide series of structurally unrelated periplasmic proteins from methionine oxidation. MsrQ provides electrons for reduction to the reductase catalytic subunit MsrP, using the quinone pool of the respiratory chain. The sequence is that of Protein-methionine-sulfoxide reductase heme-binding subunit MsrQ from Pectobacterium atrosepticum (strain SCRI 1043 / ATCC BAA-672) (Erwinia carotovora subsp. atroseptica).